Consider the following 548-residue polypeptide: Chaperonin GroEL (548 aa).

ATP contacts are provided by residues 30 to 33 (TLGP), Lys-51, 87 to 91 (DGTTT), Gly-415, 479 to 481 (NAA), and Asp-495.

The protein belongs to the chaperonin (HSP60) family. As to quaternary structure, forms a cylinder of 14 subunits composed of two heptameric rings stacked back-to-back. Interacts with the co-chaperonin GroES.

The protein resides in the cytoplasm. It carries out the reaction ATP + H2O + a folded polypeptide = ADP + phosphate + an unfolded polypeptide.. In terms of biological role, together with its co-chaperonin GroES, plays an essential role in assisting protein folding. The GroEL-GroES system forms a nano-cage that allows encapsulation of the non-native substrate proteins and provides a physical environment optimized to promote and accelerate protein folding. This Klebsiella pneumoniae (strain 342) protein is Chaperonin GroEL.